The sequence spans 262 residues: Acyl-[acyl-carrier-protein]--UDP-N-acetylglucosamine O-acyltransferase (262 aa).

Belongs to the transferase hexapeptide repeat family. LpxA subfamily. As to quaternary structure, homotrimer.

The protein resides in the cytoplasm. It catalyses the reaction a (3R)-hydroxyacyl-[ACP] + UDP-N-acetyl-alpha-D-glucosamine = a UDP-3-O-[(3R)-3-hydroxyacyl]-N-acetyl-alpha-D-glucosamine + holo-[ACP]. It participates in glycolipid biosynthesis; lipid IV(A) biosynthesis; lipid IV(A) from (3R)-3-hydroxytetradecanoyl-[acyl-carrier-protein] and UDP-N-acetyl-alpha-D-glucosamine: step 1/6. Functionally, involved in the biosynthesis of lipid A, a phosphorylated glycolipid that anchors the lipopolysaccharide to the outer membrane of the cell. This chain is Acyl-[acyl-carrier-protein]--UDP-N-acetylglucosamine O-acyltransferase, found in Burkholderia vietnamiensis (strain G4 / LMG 22486) (Burkholderia cepacia (strain R1808)).